A 302-amino-acid chain; its full sequence is uncharacterized protein (302 aa).

An N-terminal signal peptide occupies residues 1–22 (MLVVFKRLGFIVSIFSLTFLSA). Cys23 is lipidated: N-palmitoyl cysteine. Residue Cys23 is the site of S-diacylglycerol cysteine attachment.

This sequence belongs to the MG067/MG068/MG395 family.

Its subcellular location is the cell membrane. This is an uncharacterized protein from Mycoplasma pneumoniae (strain ATCC 29342 / M129 / Subtype 1) (Mycoplasmoides pneumoniae).